The following is a 90-amino-acid chain: Progonadoliberin-3 (90 aa).

The N-terminal stretch at 1-23 is a signal peptide; it reads MEAGSRVIMQVLLLALVVQVTLS. Gln24 is subject to Pyrrolidone carboxylic acid. At Gly33 the chain carries Glycine amide.

Belongs to the GnRH family. As to expression, expressed only in the terminal nerve nucleus of the telencephalon.

Its subcellular location is the secreted. Its function is as follows. Stimulates the secretion of gonadotropins. The chain is Progonadoliberin-3 (gnrh3) from Haplochromis burtoni (Burton's mouthbrooder).